A 353-amino-acid polypeptide reads, in one-letter code: Fe(3+) ions import ATP-binding protein FbpC 1 (353 aa).

The 231-residue stretch at 9 to 239 (VVFRNICKQF…PASAFIADFM (231 aa)) folds into the ABC transporter domain. Residue 41 to 48 (GPSGCGKT) participates in ATP binding.

It belongs to the ABC transporter superfamily. Fe(3+) ion importer (TC 3.A.1.10) family. In terms of assembly, the complex is composed of two ATP-binding proteins (FbpC), two transmembrane proteins (FbpB) and a solute-binding protein (FbpA).

Its subcellular location is the cell inner membrane. The enzyme catalyses Fe(3+)(out) + ATP + H2O = Fe(3+)(in) + ADP + phosphate + H(+). Its function is as follows. Part of the ABC transporter complex FbpABC involved in Fe(3+) ions import. Responsible for energy coupling to the transport system. The sequence is that of Fe(3+) ions import ATP-binding protein FbpC 1 from Rhizobium meliloti (strain 1021) (Ensifer meliloti).